Here is a 251-residue protein sequence, read N- to C-terminus: Flap endonuclease Xni (251 aa).

Residue aspartate 104 participates in Mg(2+) binding. In terms of domain architecture, 5'-3' exonuclease spans 160-249; sequence VQPQQLPDYW…IDGNLQQLRL (90 aa). K(+) contacts are provided by leucine 171, alanine 172, proline 180, valine 182, and isoleucine 185. The tract at residues 184–189 is interaction with DNA; sequence GIGPKS.

This sequence belongs to the Xni family. Mg(2+) serves as cofactor. Requires K(+) as cofactor.

Its function is as follows. Has flap endonuclease activity. During DNA replication, flap endonucleases cleave the 5'-overhanging flap structure that is generated by displacement synthesis when DNA polymerase encounters the 5'-end of a downstream Okazaki fragment. The protein is Flap endonuclease Xni of Escherichia coli O7:K1 (strain IAI39 / ExPEC).